Reading from the N-terminus, the 209-residue chain is Thiamine-phosphate synthase (209 aa).

4-amino-2-methyl-5-(diphosphooxymethyl)pyrimidine contacts are provided by residues 36 to 40 and Asn68; that span reads QYRDK. Mg(2+) contacts are provided by Asp69 and Asp87. 4-amino-2-methyl-5-(diphosphooxymethyl)pyrimidine is bound at residue Thr106. 133–135 contributes to the 2-[(2R,5Z)-2-carboxy-4-methylthiazol-5(2H)-ylidene]ethyl phosphate binding site; the sequence is SST. Lys136 contributes to the 4-amino-2-methyl-5-(diphosphooxymethyl)pyrimidine binding site. Gly163 provides a ligand contact to 2-[(2R,5Z)-2-carboxy-4-methylthiazol-5(2H)-ylidene]ethyl phosphate.

This sequence belongs to the thiamine-phosphate synthase family. Mg(2+) is required as a cofactor.

It carries out the reaction 2-[(2R,5Z)-2-carboxy-4-methylthiazol-5(2H)-ylidene]ethyl phosphate + 4-amino-2-methyl-5-(diphosphooxymethyl)pyrimidine + 2 H(+) = thiamine phosphate + CO2 + diphosphate. It catalyses the reaction 2-(2-carboxy-4-methylthiazol-5-yl)ethyl phosphate + 4-amino-2-methyl-5-(diphosphooxymethyl)pyrimidine + 2 H(+) = thiamine phosphate + CO2 + diphosphate. The catalysed reaction is 4-methyl-5-(2-phosphooxyethyl)-thiazole + 4-amino-2-methyl-5-(diphosphooxymethyl)pyrimidine + H(+) = thiamine phosphate + diphosphate. Its pathway is cofactor biosynthesis; thiamine diphosphate biosynthesis; thiamine phosphate from 4-amino-2-methyl-5-diphosphomethylpyrimidine and 4-methyl-5-(2-phosphoethyl)-thiazole: step 1/1. Condenses 4-methyl-5-(beta-hydroxyethyl)thiazole monophosphate (THZ-P) and 2-methyl-4-amino-5-hydroxymethyl pyrimidine pyrophosphate (HMP-PP) to form thiamine monophosphate (TMP). The sequence is that of Thiamine-phosphate synthase from Pseudomonas aeruginosa (strain LESB58).